Reading from the N-terminus, the 217-residue chain is Mucosal pentraxin (217 aa).

The first 19 residues, Met-1–Thr-19, serve as a signal peptide directing secretion. A Pentraxin (PTX) domain is found at Arg-24 to Leu-217. A disulfide bond links Cys-55 and Cys-114. The Ca(2+) site is built by Asp-77, Asn-78, Glu-155, Gln-156, Asp-157, and Gln-167.

Belongs to the pentraxin family. In terms of assembly, homopentamer. Pentraxin (or pentaxin) have a discoid arrangement of 5 non-covalently bound subunits. The cofactor is Ca(2+).

Its subcellular location is the secreted. This chain is Mucosal pentraxin (MPTX), found in Bos taurus (Bovine).